A 333-amino-acid polypeptide reads, in one-letter code: Chitinase-like protein 2 (333 aa).

Positions 1–27 (MVSKPLFSLLLLTVALVVFQTGTLVNA) are cleaved as a signal peptide. An intrachain disulfide couples Cys-50 to Cys-56. The N-linked (GlcNAc...) asparagine glycan is linked to Asn-65. A disulfide bridge links Cys-165 with Cys-175. N-linked (GlcNAc...) asparagine glycosylation is found at Asn-216 and Asn-252. Cys-275 and Cys-313 are joined by a disulfide. The disordered stretch occupies residues 307–333 (PHEKLSCADQEPFSSSSSAPPSSGSSS). A compositionally biased stretch (low complexity) spans 320 to 333 (SSSSSAPPSSGSSS).

Belongs to the glycosyl hydrolase 19 family. As to expression, mostly expressed in stems, especially in xylem and interfascicular fibers.

The protein resides in the secreted. In terms of biological role, no chitinase activity. Required for proper cell wall biosynthesis in etiolated seedlings. Prevents lignin accumulation in hypocotyls. The protein is Chitinase-like protein 2 (CTL2) of Arabidopsis thaliana (Mouse-ear cress).